A 147-amino-acid chain; its full sequence is Hemoglobin subunit epsilon (147 aa).

Residues 3-147 (HFTAEEKVAI…VAIALGHKYH (145 aa)) form the Globin domain. Serine 14 and serine 51 each carry phosphoserine. Residues histidine 64 and histidine 93 each coordinate heme b.

It belongs to the globin family. As to quaternary structure, heterotetramer of two alpha chains and two epsilon chains in early embryonic hemoglobin Gower-2; two zeta chains and two epsilon chains in early embryonic hemoglobin Gower-1. In terms of tissue distribution, red blood cells.

In terms of biological role, the epsilon chain is a beta-type chain of early mammalian embryonic hemoglobin. This is Hemoglobin subunit epsilon (HBE1) from Cebus kaapori (Ka'apor capuchin).